The following is a 1086-amino-acid chain: Formin-like protein 2 (1086 aa).

Residue glycine 2 is the site of N-myristoyl glycine attachment. The 447-residue stretch at 23 to 469 folds into the GBD/FH3 domain; that stretch reads LPMPEPGELE…EAIQRQSTLE (447 aa). The residue at position 188 (serine 188) is a Phosphoserine. The interval 513-597 is disordered; the sequence is SVGPTMGAAS…APPLPSAPPL (85 aa). A compositionally biased stretch (pro residues) spans 525-537; sequence PLPPPPPPLPPSS. Positions 538-547 are enriched in polar residues; sequence DTPETVQNGP. Composition is skewed to pro residues over residues 548-576 and 583-597; these read VTPP…PLPG and PAPP…APPL. The FH2 domain occupies 616–1007; it reads IKKPIKTKFR…LMEKLLEQEA (392 aa). Positions 1040 to 1079 constitute a DAD domain; that stretch reads NRHVYEGKDGAIEDIITVLKTVPFTARTAKRGSRFFCEPV.

This sequence belongs to the formin homology family.

It localises to the cytoplasm. In terms of biological role, plays a role in the regulation of cell morphology and cytoskeletal organization. Required in the cortical actin filament dynamics. In Homo sapiens (Human), this protein is Formin-like protein 2.